The sequence spans 272 residues: Dermonecrotic toxin SpeSicTox-betaIB1a (272 aa).

Histidine 5 is an active-site residue. Residues glutamate 25 and aspartate 27 each coordinate Mg(2+). Histidine 41 (nucleophile) is an active-site residue. 2 cysteine pairs are disulfide-bonded: cysteine 45/cysteine 51 and cysteine 47/cysteine 191. Mg(2+) is bound at residue aspartate 85.

Belongs to the arthropod phospholipase D family. Class II subfamily. The cofactor is Mg(2+). Expressed by the venom gland.

The protein localises to the secreted. The catalysed reaction is an N-(acyl)-sphingosylphosphocholine = an N-(acyl)-sphingosyl-1,3-cyclic phosphate + choline. The enzyme catalyses an N-(acyl)-sphingosylphosphoethanolamine = an N-(acyl)-sphingosyl-1,3-cyclic phosphate + ethanolamine. It catalyses the reaction a 1-acyl-sn-glycero-3-phosphocholine = a 1-acyl-sn-glycero-2,3-cyclic phosphate + choline. It carries out the reaction a 1-acyl-sn-glycero-3-phosphoethanolamine = a 1-acyl-sn-glycero-2,3-cyclic phosphate + ethanolamine. Functionally, dermonecrotic toxins cleave the phosphodiester linkage between the phosphate and headgroup of certain phospholipids (sphingolipid and lysolipid substrates), forming an alcohol (often choline) and a cyclic phosphate. This toxin acts on sphingomyelin (SM). It may also act on ceramide phosphoethanolamine (CPE), lysophosphatidylcholine (LPC) and lysophosphatidylethanolamine (LPE), but not on lysophosphatidylserine (LPS), and lysophosphatidylglycerol (LPG). It acts by transphosphatidylation, releasing exclusively cyclic phosphate products as second products. Induces dermonecrosis, hemolysis, increased vascular permeability, edema, inflammatory response, and platelet aggregation. The chain is Dermonecrotic toxin SpeSicTox-betaIB1a from Sicarius peruensis (Six-eyed sand spider).